A 136-amino-acid chain; its full sequence is Large ribosomal subunit protein uL16c (136 aa).

It belongs to the universal ribosomal protein uL16 family. As to quaternary structure, part of the 50S ribosomal subunit.

The protein localises to the plastid. It localises to the chloroplast. This is Large ribosomal subunit protein uL16c from Chlamydomonas reinhardtii (Chlamydomonas smithii).